A 170-amino-acid polypeptide reads, in one-letter code: Mediator of RNA polymerase II transcription subunit 10 (170 aa).

It belongs to the Mediator complex subunit 10 family. As to quaternary structure, component of the Mediator complex.

It is found in the nucleus. Component of the Mediator complex, a coactivator involved in the regulated transcription of nearly all RNA polymerase II-dependent genes. Mediator functions as a bridge to convey information from gene-specific regulatory proteins to the basal RNA polymerase II transcription machinery. Mediator is recruited to promoters by direct interactions with regulatory proteins and serves as a scaffold for the assembly of a functional preinitiation complex with RNA polymerase II and the general transcription factors. The chain is Mediator of RNA polymerase II transcription subunit 10 (NUT2) from Candida albicans (strain SC5314 / ATCC MYA-2876) (Yeast).